A 622-amino-acid chain; its full sequence is Apical membrane antigen 1 (622 aa).

An N-terminal signal peptide occupies residues 1–24; sequence MRKLYCVLLLSAFEFTYMINFGRG. Topologically, residues 25–546 are extracellular; sequence QNYWEHPYQK…EHKPTYDKMK (522 aa). 5 cysteine pairs are disulfide-bonded: Cys149-Cys302, Cys217-Cys247, Cys263-Cys275, Cys320-Cys418, and Cys337-Cys409. The N-linked (GlcNAc...) asparagine glycan is linked to Asn162. N-linked (GlcNAc...) asparagine glycans are attached at residues Asn286, Asn371, Asn421, Asn422, and Asn499. Intrachain disulfides connect Cys443–Cys502, Cys490–Cys507, and Cys492–Cys509. A helical membrane pass occupies residues 547-567; that stretch reads IIIASSAAVAVLATILMVYLY. The Cytoplasmic portion of the chain corresponds to 568 to 622; it reads KRKGNAEKYDKMDEPQDYGKSNSRNDEMLDPEASFWGEEKRASHTTPVLMEKPYY. Positions 577 to 607 are disordered; sequence DKMDEPQDYGKSNSRNDEMLDPEASFWGEEK.

The protein belongs to the apicomplexan parasites AMA1 family.

The protein localises to the membrane. Its function is as follows. Involved in parasite invasion of erythrocytes. This chain is Apical membrane antigen 1 (AMA-1), found in Plasmodium falciparum (isolate 7G8).